Here is a 235-residue protein sequence, read N- to C-terminus: Clathrin light chain A (235 aa).

A disordered region spans residues 1–32; that stretch reads MAELDPFGAPAGAPGGPALGNGVAGAGEEDPA. Positions 13–25 are enriched in gly residues; sequence APGGPALGNGVAG. Residues 99–161 are involved in binding clathrin heavy chain; sequence VDRLQSEPES…QLQKTKANNR (63 aa). 2 positions are modified to phosphoserine: S104 and S193. K210 carries the N6-acetyllysine modification. The residue at position 223 (S223) is a Phosphoserine. K229 is subject to N6-acetyllysine.

The protein belongs to the clathrin light chain family. Clathrin coats are formed from molecules containing 3 heavy chains and 3 light chains. Interacts with CALY; the interaction stimulates clathrin self-assembly and clathrin-mediated endocytosis. Interacts with CKAP5 and TACC3 forming the TACC3/ch-TOG/clathrin complex located at spindle inter-microtubules bridges; the complex implicates clathrin triskelions.

The protein resides in the cytoplasmic vesicle membrane. It localises to the membrane. The protein localises to the coated pit. It is found in the cytoplasm. Its subcellular location is the cytoskeleton. The protein resides in the spindle. In terms of biological role, clathrin is the major protein of the polyhedral coat of coated pits and vesicles. Acts as a component of the TACC3/ch-TOG/clathrin complex proposed to contribute to stabilization of kinetochore fibers of the mitotic spindle by acting as inter-microtubule bridge. In Mus musculus (Mouse), this protein is Clathrin light chain A (Clta).